We begin with the raw amino-acid sequence, 67 residues long: Penaeidin-4d (67 aa).

The N-terminal stretch at methionine 1 to glycine 19 is a signal peptide. Cystine bridges form between cysteine 42-cysteine 56, cysteine 45-cysteine 63, and cysteine 57-cysteine 64. Leucine 66 is modified (leucine amide).

Belongs to the penaeidin family.

The protein localises to the cytoplasmic granule. Functionally, antibacterial and antifungal activity. Presents chitin-binding activity. In Penaeus setiferus (Atlantic white shrimp), this protein is Penaeidin-4d.